We begin with the raw amino-acid sequence, 208 residues long: Small ribosomal subunit protein uS4 (208 aa).

Residues 98 to 178 (SRLDNVVYRM…RPKWLEYDAE (81 aa)) enclose the S4 RNA-binding domain.

Belongs to the universal ribosomal protein uS4 family. In terms of assembly, part of the 30S ribosomal subunit. Contacts protein S5. The interaction surface between S4 and S5 is involved in control of translational fidelity.

Functionally, one of the primary rRNA binding proteins, it binds directly to 16S rRNA where it nucleates assembly of the body of the 30S subunit. With S5 and S12 plays an important role in translational accuracy. The protein is Small ribosomal subunit protein uS4 of Acetivibrio thermocellus (strain ATCC 27405 / DSM 1237 / JCM 9322 / NBRC 103400 / NCIMB 10682 / NRRL B-4536 / VPI 7372) (Clostridium thermocellum).